A 584-amino-acid polypeptide reads, in one-letter code: AP-1-like transcription factor yap1 (584 aa).

Positions 23–179 (LAALSSNQPP…AFRERKEKHL (157 aa)) are disordered. The short motif at 35–42 (QQNDKQRS) is the Bipartite nuclear localization signal element. Over residues 36–48 (QNDKQRSQAKTDP) the composition is skewed to basic and acidic residues. Over residues 52-67 (PGNMSSGSFSMSPGFN) the composition is skewed to low complexity. A Bipartite nuclear localization signal motif is present at residues 68–75 (KTHPGSGG). Residues 79-94 (GDDESPFLDFNPELDF) are compositionally biased toward acidic residues. 2 stretches are compositionally biased toward basic and acidic residues: residues 112–144 (SEEH…DKAA) and 170–179 (AFRERKEKHL). One can recognise a bZIP domain in the interval 154–217 (SEPTSKRKAQ…ERLQVELREY (64 aa)). The segment at 159–180 (KRKAQNRAAQRAFRERKEKHLK) is basic motif. The leucine-zipper stretch occupies residues 182-189 (LETKVDEL). Positions 211–332 (QVELREYRKR…PSPKVPSVYN (122 aa)) are transcription activation 1. Disordered regions lie at residues 267 to 379 (IFNG…TKLN) and 418 to 441 (RGKS…TPGP). The n-CRD stretch occupies residues 284-296 (SSPATSDSQVPGV). Over residues 300-309 (ETLNGSNNRG) the composition is skewed to polar residues. Low complexity predominate over residues 336 to 362 (SASSHDSSNSCSPSSSSDSHQSQMLSS). Composition is skewed to polar residues over residues 363 to 379 (NGTS…TKLN) and 422 to 437 (ESVS…NYEQ). The tract at residues 377 to 480 (KLNDSVQNHH…SQDFGTFFDD (104 aa)) is transcription activation 2. Intrachain disulfides connect Cys531/Cys555, Cys531/Cys564, and Cys555/Cys564. Residues 531-564 (CTKIWDRLQSMEKFRNGEIDVDNLCSELRTKARC) form a c-CRD region. The Nuclear export signal signature appears at 549–556 (IDVDNLCS).

It belongs to the bZIP family. YAP subfamily. In terms of processing, depending on the oxidative stress inducing agent, yap1 can undergo two distinct conformational changes, both involving disulfide bond formation, and both masking the nuclear export signal, thus abolishing nuclear export.

It is found in the nucleus. The protein localises to the cytoplasm. Functionally, transcription activator involved in oxidative stress response and redox homeostasis. Regulates the transcription of genes encoding antioxidant enzymes and components of the cellular thiol-reducing pathways. May be involved in antifungal resistance to voriconazole. The polypeptide is AP-1-like transcription factor yap1 (Aspergillus flavus (strain ATCC 200026 / FGSC A1120 / IAM 13836 / NRRL 3357 / JCM 12722 / SRRC 167)).